A 139-amino-acid polypeptide reads, in one-letter code: MTTHNRPARVAEEFRHELSAILARGLKDPRITGFVTVTGSKMSPDLKEATVYVSIHGDERVRKDTFAGLQAAAGFLQREVSRALRLRNTPHLRFVYDESVARGDRIERLLREARTQGQAAPAPDVEPAPGAAPDDEAEE.

The segment at 112–139 (EARTQGQAAPAPDVEPAPGAAPDDEAEE) is disordered. The span at 119 to 132 (AAPAPDVEPAPGAA) shows a compositional bias: low complexity.

Belongs to the RbfA family. In terms of assembly, monomer. Binds 30S ribosomal subunits, but not 50S ribosomal subunits or 70S ribosomes.

It is found in the cytoplasm. Its function is as follows. One of several proteins that assist in the late maturation steps of the functional core of the 30S ribosomal subunit. Associates with free 30S ribosomal subunits (but not with 30S subunits that are part of 70S ribosomes or polysomes). Required for efficient processing of 16S rRNA. May interact with the 5'-terminal helix region of 16S rRNA. This Anaeromyxobacter dehalogenans (strain 2CP-1 / ATCC BAA-258) protein is Ribosome-binding factor A.